The primary structure comprises 104 residues: ESAT-6-like protein (104 aa).

The stretch at 12 to 43 forms a coiled coil; the sequence is MAQAAQDIEQSANAIRGMQNQLASAKDQLRSH.

It belongs to the WXG100 family. CFP-10 subfamily. In isolation forms a homodimer. Forms a tight 1:1 complex with EsxA. Forms a complex with EsxA and EccC, probably wholly mediated by EsxB; binds in a pocket in the third FtsK (ATPase) domain of EccC (residues 1163-1208).

It localises to the secreted. In terms of biological role, may help regulate assembly and function of the type VII secretion system (T7SS). Binds to EccC and induces its multimerization. May serve as a chaperone for EsxA. This is ESAT-6-like protein from Thermomonospora curvata (strain ATCC 19995 / DSM 43183 / JCM 3096 / KCTC 9072 / NBRC 15933 / NCIMB 10081 / Henssen B9).